The following is a 295-amino-acid chain: Bifunctional protein FolD (295 aa).

Residues 166–168 (GRS), S195, and I236 contribute to the NADP(+) site.

The protein belongs to the tetrahydrofolate dehydrogenase/cyclohydrolase family. In terms of assembly, homodimer.

The enzyme catalyses (6R)-5,10-methylene-5,6,7,8-tetrahydrofolate + NADP(+) = (6R)-5,10-methenyltetrahydrofolate + NADPH. It carries out the reaction (6R)-5,10-methenyltetrahydrofolate + H2O = (6R)-10-formyltetrahydrofolate + H(+). The protein operates within one-carbon metabolism; tetrahydrofolate interconversion. Its function is as follows. Catalyzes the oxidation of 5,10-methylenetetrahydrofolate to 5,10-methenyltetrahydrofolate and then the hydrolysis of 5,10-methenyltetrahydrofolate to 10-formyltetrahydrofolate. This is Bifunctional protein FolD from Chlorobium phaeovibrioides (strain DSM 265 / 1930) (Prosthecochloris vibrioformis (strain DSM 265)).